Consider the following 284-residue polypeptide: Trimeric intracellular cation channel type B (284 aa).

Residues 1-15 are Lumenal-facing; that stretch reads MESFSELSLQFSQLS. A helical membrane pass occupies residues 16–32; that stretch reads MFPFFETAHYLTSVMSA. The Cytoplasmic portion of the chain corresponds to 33 to 44; that stretch reads REQAGAVDVASR. The helical transmembrane segment at 45 to 68 threads the bilayer; sequence SPLASWFSSMLYCFGGGILSSILL. Residues 69–79 are Lumenal-facing; that stretch reads AEPPVGILSNT. A helical membrane pass occupies residues 80–99; the sequence is TSIILASAVWYMVYYFPYDL. Residues 100 to 102 lie on the Cytoplasmic side of the membrane; that stretch reads FYN. A helical membrane pass occupies residues 103-121; the sequence is CFFFLPIRLILAGMKEVTR. Lys-117 and Arg-121 together coordinate a 1,2-diacyl-sn-glycero-3-phospho-(1D-myo-inositol-4,5-bisphosphate). Residues 122–139 are Lumenal-facing; sequence TWKILSGVAHAHSHYKDA. Residues 140–157 form a helical membrane-spanning segment; that stretch reads MLVMITIGWARGAGGGLI. Residues 158 to 178 are Cytoplasmic-facing; it reads SNFEQLVRGVWKPESNEFLKM. The chain crosses the membrane as a helical span at residues 179 to 196; that stretch reads SYPVKVTLIGAVLFTLQH. Residues 197–204 are Lumenal-facing; sequence GQYLPISR. The helical transmembrane segment at 205 to 225 threads the bilayer; it reads HNLMFIYTLFLILIKVTMMLT. At 226 to 284 the chain is on the cytoplasmic side; sequence RSTASPFLPLETSLQHILFSRQQIPAEVRESPSSSGDKGKPSKKTLDKDSGEQDNKKDN. The segment at 250 to 284 is disordered; sequence PAEVRESPSSSGDKGKPSKKTLDKDSGEQDNKKDN. Over residues 262–284 the composition is skewed to basic and acidic residues; it reads DKGKPSKKTLDKDSGEQDNKKDN.

Belongs to the TMEM38 family. In terms of assembly, homotrimer; conformation seems to be controled by binding to diacylglycerol (DAG).

The protein localises to the endoplasmic reticulum membrane. It catalyses the reaction K(+)(in) = K(+)(out). With respect to regulation, channel activity is activated by increased cytosolic Ca(2+) levels and blocked by luminal high Ca(2+) levels. In terms of biological role, intracellular monovalent cation channel required for maintenance of rapid intracellular calcium release. Acts as a potassium counter-ion channel that functions in synchronization with calcium release from intracellular stores. Activated by increased cytosolic Ca(2+) levels. The chain is Trimeric intracellular cation channel type B (tmem38b) from Xenopus tropicalis (Western clawed frog).